We begin with the raw amino-acid sequence, 139 residues long: Small ribosomal subunit protein eS12 (139 aa).

Belongs to the eukaryotic ribosomal protein eS12 family. In terms of assembly, subunit of the 40S ribosomal complex. Part of the small subunit (SSU) processome, composed of more than 70 proteins and the RNA chaperone small nucleolar RNA (snoRNA) U3.

The protein resides in the nucleus. It is found in the nucleolus. Its function is as follows. Subunit of the 40S ribosomal complex. Part of the small subunit (SSU) processome, first precursor of the small eukaryotic ribosomal subunit. During the assembly of the SSU processome in the nucleolus, many ribosome biogenesis factors, an RNA chaperone and ribosomal proteins associate with the nascent pre-rRNA and work in concert to generate RNA folding, modifications, rearrangements and cleavage as well as targeted degradation of pre-ribosomal RNA by the RNA exosome. In wing imaginal disks, might have a role in translation rate, growth and cell competition, probably through regulation of Xrp1 expression. Might have a role in development and longevity. The protein is Small ribosomal subunit protein eS12 of Drosophila melanogaster (Fruit fly).